A 229-amino-acid polypeptide reads, in one-letter code: UPF0488 protein C8orf33 (229 aa).

Residues Met-1–Gly-16 are compositionally biased toward low complexity. Positions Met-1 to Pro-96 are disordered. Residue Ala-2 is modified to N-acetylalanine. Position 27 is an omega-N-methylarginine (Arg-27). Basic residues predominate over residues Lys-69 to Asn-79. At Ser-82 the chain carries Phosphoserine.

This sequence belongs to the UPF0488 family.

This Homo sapiens (Human) protein is UPF0488 protein C8orf33 (C8orf33).